The following is an 88-amino-acid chain: MASFLSFLLGEKKKTASVAKERLQIILAHERNGRNASEPDYLPALQRELVAVISKYVKISPEDLKVQLERQDNLEVLEVKIELPDTVR.

Belongs to the MinE family.

In terms of biological role, prevents the cell division inhibition by proteins MinC and MinD at internal division sites while permitting inhibition at polar sites. This ensures cell division at the proper site by restricting the formation of a division septum at the midpoint of the long axis of the cell. In Paracidovorax citrulli (strain AAC00-1) (Acidovorax citrulli), this protein is Cell division topological specificity factor.